The primary structure comprises 213 residues: Uridine kinase (213 aa).

ATP is bound at residue 15-22; it reads GASASGKS.

It belongs to the uridine kinase family.

The protein resides in the cytoplasm. The enzyme catalyses uridine + ATP = UMP + ADP + H(+). It catalyses the reaction cytidine + ATP = CMP + ADP + H(+). It participates in pyrimidine metabolism; CTP biosynthesis via salvage pathway; CTP from cytidine: step 1/3. The protein operates within pyrimidine metabolism; UMP biosynthesis via salvage pathway; UMP from uridine: step 1/1. The protein is Uridine kinase of Erwinia tasmaniensis (strain DSM 17950 / CFBP 7177 / CIP 109463 / NCPPB 4357 / Et1/99).